Consider the following 130-residue polypeptide: Small ribosomal subunit protein uS9 (130 aa).

The protein belongs to the universal ribosomal protein uS9 family.

The chain is Small ribosomal subunit protein uS9 from Shewanella denitrificans (strain OS217 / ATCC BAA-1090 / DSM 15013).